A 334-amino-acid polypeptide reads, in one-letter code: Dual specificity mitogen-activated protein kinase kinase 6 (334 aa).

A compositionally biased stretch (basic residues) spans 1–11 (MSQSKGKKRNP). Residues 1-34 (MSQSKGKKRNPGLKIPKEAFEQPQTSSTPPRDLD) are disordered. The d domain stretch occupies residues 4 to 19 (SKGKKRNPGLKIPKEA). The region spanning 53–314 (LEPIMELGRG…YPELMQHPFF (262 aa)) is the Protein kinase domain. Residues 59 to 67 (LGRGAYGVV) and K82 contribute to the ATP site. D179 serves as the catalytic Proton acceptor. S207 is modified ((Microbial infection) O-acetylserine; by Yersinia YopJ; alternate). S207 is subject to Phosphoserine; by MAP3K; alternate. The residue at position 211 (T211) is a (Microbial infection) O-acetylthreonine; by Yersinia YopJ; alternate. A Phosphothreonine; by MAP3K; alternate modification is found at T211. A DVD domain region spans residues 311–334 (HPFFTLHESKGTDVASFVKLILGD).

The protein belongs to the protein kinase superfamily. STE Ser/Thr protein kinase family. MAP kinase kinase subfamily. In terms of assembly, dimer. Interacts (via its D domain) with its substrates MAPK11, MAPK12, MAPK13 and MAPK14. Interacts (via its DVD domain) with MAP3Ks activators like MAP3K5/ASK1, MAP3K1/MEKK1, MAP3K2/MEKK2, MAP3K3/MEKK3, MAP3K4/MEKK4, MAP3K7/TAK1, MAP3K11/MLK3 and MAP3K17/TAOK2. Interacts with DCTN1. Interacts with EIF2AK2/PKR. (Microbial infection) Interacts with Yersinia YopJ. In terms of processing, weakly autophosphorylated. Phosphorylated at Ser-207 and Thr-211 by the majority of M3Ks, such as MAP3K5/ASK1, MAP3K1/MEKK1, MAP3K2/MEKK2, MAP3K3/MEKK3, MAP3K4/MEKK4, MAP3K7/TAK1, MAP3K11/MLK3 and MAP3K17/TAOK2. Post-translationally, in response to genotoxic stress, MAP3K-phosphorylated MAP2K6 is ubiquitinated and degraded by the SCF(FBXO31) complex. (Microbial infection) Acetylation of Ser-207 and Thr-211 by Yersinia YopJ prevents phosphorylation and activation, thus blocking the MAPK signaling pathway. Isoform 2 is only expressed in skeletal muscle. Isoform 1 is expressed in skeletal muscle, heart, and in lesser extent in liver or pancreas.

The protein resides in the nucleus. It localises to the cytoplasm. Its subcellular location is the cytoskeleton. It catalyses the reaction L-seryl-[protein] + ATP = O-phospho-L-seryl-[protein] + ADP + H(+). The catalysed reaction is L-threonyl-[protein] + ATP = O-phospho-L-threonyl-[protein] + ADP + H(+). It carries out the reaction L-tyrosyl-[protein] + ATP = O-phospho-L-tyrosyl-[protein] + ADP + H(+). Its activity is regulated as follows. Activated by dual phosphorylation on Ser-207 and Thr-211 in response to a variety of cellular stresses, including UV radiation, osmotic shock, hypoxia, inflammatory cytokines, interferon gamma (IFNG), and less often by growth factors. MAP2K6/MKK6 is activated by the majority of M3Ks, such as MAP3K5/ASK1, MAP3K1/MEKK1, MAP3K2/MEKK2, MAP3K3/MEKK3, MAP3K4/MEKK4, MAP3K7/TAK1, MAP3K11/MLK3 and MAP3K17/TAOK2. In terms of biological role, dual specificity protein kinase which acts as an essential component of the MAP kinase signal transduction pathway. With MAP3K3/MKK3, catalyzes the concomitant phosphorylation of a threonine and a tyrosine residue in the MAP kinases p38 MAPK11, MAPK12, MAPK13 and MAPK14 and plays an important role in the regulation of cellular responses to cytokines and all kinds of stresses. Especially, MAP2K3/MKK3 and MAP2K6/MKK6 are both essential for the activation of MAPK11 and MAPK13 induced by environmental stress, whereas MAP2K6/MKK6 is the major MAPK11 activator in response to TNF. MAP2K6/MKK6 also phosphorylates and activates PAK6. The p38 MAP kinase signal transduction pathway leads to direct activation of transcription factors. Nuclear targets of p38 MAP kinase include the transcription factors ATF2 and ELK1. Within the p38 MAPK signal transduction pathway, MAP3K6/MKK6 mediates phosphorylation of STAT4 through MAPK14 activation, and is therefore required for STAT4 activation and STAT4-regulated gene expression in response to IL-12 stimulation. The pathway is also crucial for IL-6-induced SOCS3 expression and down-regulation of IL-6-mediated gene induction; and for IFNG-dependent gene transcription. Has a role in osteoclast differentiation through NF-kappa-B transactivation by TNFSF11, and in endochondral ossification and since SOX9 is another likely downstream target of the p38 MAPK pathway. MAP2K6/MKK6 mediates apoptotic cell death in thymocytes. Acts also as a regulator for melanocytes dendricity, through the modulation of Rho family GTPases. This is Dual specificity mitogen-activated protein kinase kinase 6 (MAP2K6) from Homo sapiens (Human).